We begin with the raw amino-acid sequence, 425 residues long: Raffinose permease (425 aa).

Over 1 to 11 (MNSASTHKNTD) the chain is Cytoplasmic. Residues 12-32 (FWIFGLFFFLYFFIMATCFPF) form a helical membrane-spanning segment. Over 33–48 (LPVWLSDVVGLSKTDT) the chain is Periplasmic. A helical membrane pass occupies residues 49–69 (GIVFSCLSLFAISFQPLLGVI). The Cytoplasmic segment spans residues 70–78 (SDRLGLKKN). The helical transmembrane segment at 79-99 (LIWSISLLLVFFAPFFLYVFA) threads the bilayer. Topologically, residues 100-105 (PLLHLN) are periplasmic. A helical membrane pass occupies residues 106–126 (IWAGALTGGVFIGFVFSAGAG). At 127-147 (AIEAYIERVSRSSGFEYGKAR) the chain is on the cytoplasmic side. The chain crosses the membrane as a helical span at residues 148 to 168 (MFGCLGWALCATMAGILFNVD). Residue proline 169 is a topological domain, periplasmic. A helical membrane pass occupies residues 170–190 (SLVFWMGSGGALLLLLLLYLA). Residues 191–229 (RPSTSQTAMVMNALGANSSLISTRMVFSLFRMRQMWMFV) lie on the Cytoplasmic side of the membrane. A helical membrane pass occupies residues 230-250 (LYTIGVACVYDVFDQQFAIFF). The Periplasmic portion of the chain corresponds to 251 to 265 (RSFFDTPQAGIKAFG). The chain crosses the membrane as a helical span at residues 266–286 (FATTAGEICNAIIMFCTPWII). At 287–294 (NRIGAKNT) the chain is on the cytoplasmic side. A helical membrane pass occupies residues 295-315 (LLVAGGIMTIRITGSAFATTM). A topological domain (periplasmic) is located at residue threonine 316. A helical membrane pass occupies residues 317 to 337 (EVVILKMLHALEVPFLLVGAF). The Cytoplasmic segment spans residues 338-351 (KYITGVFDTRLSAT). The helical transmembrane segment at 352-372 (VYLIGFQFSKQLAAILLSTFA) threads the bilayer. Residues 373–383 (GHLYDRMGFQN) are Periplasmic-facing. The chain crosses the membrane as a helical span at residues 384–404 (TYFVLGMIVLTVTVISAFTLS). Over 405 to 425 (SSPGIVHPSVEKAPVAHSEIN) the chain is Cytoplasmic.

Belongs to the major facilitator superfamily. Oligosaccharide:H(+) symporter (OHS) (TC 2.A.1.5) family. Monomer.

Its subcellular location is the cell inner membrane. Responsible for transport of raffinose into the cell. Can also transport lactose and melibiose. Has weak activity with maltose. The chain is Raffinose permease from Escherichia coli.